The chain runs to 304 residues: uncharacterized protein (304 aa).

The signal sequence occupies residues 1–25 (MVKTAMLGAVALVIALGGTCGVADA). A GP-PDE domain is found at 34-303 (PMIVAHRAGT…DSPLAAQQWR (270 aa)).

This is an uncharacterized protein from Mycobacterium tuberculosis (strain CDC 1551 / Oshkosh).